The primary structure comprises 514 residues: tRNA-2-methylthio-N(6)-dimethylallyladenosine synthase (514 aa).

A disordered region spans residues 1 to 21; the sequence is MNEEQRKASSVDVLAERDKKA. One can recognise an MTTase N-terminal domain in the interval 68-186; it reads RTFLIKTYGC…LPEILEEAYL (119 aa). C77, C113, C147, C223, C227, and C230 together coordinate [4Fe-4S] cluster. The Radical SAM core domain maps to 209–440; that stretch reads REGNIKAWVN…KKVGHYSQIA (232 aa). One can recognise a TRAM domain in the interval 442–505; that stretch reads SKYEGQTVTV…QYSLNGSFIK (64 aa).

This sequence belongs to the methylthiotransferase family. MiaB subfamily. Monomer. Requires [4Fe-4S] cluster as cofactor.

It is found in the cytoplasm. The enzyme catalyses N(6)-dimethylallyladenosine(37) in tRNA + (sulfur carrier)-SH + AH2 + 2 S-adenosyl-L-methionine = 2-methylsulfanyl-N(6)-dimethylallyladenosine(37) in tRNA + (sulfur carrier)-H + 5'-deoxyadenosine + L-methionine + A + S-adenosyl-L-homocysteine + 2 H(+). Catalyzes the methylthiolation of N6-(dimethylallyl)adenosine (i(6)A), leading to the formation of 2-methylthio-N6-(dimethylallyl)adenosine (ms(2)i(6)A) at position 37 in tRNAs that read codons beginning with uridine. This is tRNA-2-methylthio-N(6)-dimethylallyladenosine synthase from Staphylococcus aureus (strain USA300 / TCH1516).